Reading from the N-terminus, the 229-residue chain is Potassium/proton antiporter CemA (229 aa).

A run of 3 helical transmembrane segments spans residues 7–27 (LNPL…SLSF), 106–126 (IILH…YSIL), and 189–209 (IISG…KYWI).

This sequence belongs to the CemA family.

It is found in the plastid. Its subcellular location is the chloroplast inner membrane. The catalysed reaction is K(+)(in) + H(+)(out) = K(+)(out) + H(+)(in). In terms of biological role, contributes to K(+)/H(+) antiport activity by supporting proton efflux to control proton extrusion and homeostasis in chloroplasts in a light-dependent manner to modulate photosynthesis. Prevents excessive induction of non-photochemical quenching (NPQ) under continuous-light conditions. Indirectly promotes efficient inorganic carbon uptake into chloroplasts. The protein is Potassium/proton antiporter CemA of Nymphaea alba (White water-lily).